The sequence spans 577 residues: ER degradation-enhancing alpha-mannosidase-like protein 2 (577 aa).

A signal peptide spans 1 to 21 (MPFRLLIPLGLVCVLLPLHHG). 4 N-linked (GlcNAc...) asparagine glycosylation sites follow: asparagine 90, asparagine 112, asparagine 289, and asparagine 450. A disordered region spans residues 513–561 (PKRAQRKTVRSGPWEPQSGPATLSSPANQPREKQPAQQRTPLLSCPSQP). Polar residues-rich tracts occupy residues 531-540 (GPATLSSPAN) and 547-561 (PAQQ…PSQP).

Belongs to the glycosyl hydrolase 47 family. N-glycosylated.

It is found in the endoplasmic reticulum lumen. Involved in the endoplasmic reticulum-associated degradation (ERAD) pathway that targets misfolded glycoproteins for degradation in an N-glycan-dependent manner. May initiate ERAD by promoting the first mannose trimming step of ERAD substrates, from Man9GlcNAc2 to Man8GlcNAc2. Seems to recognize and bind to exposed hydrophobic regions in target proteins. The polypeptide is ER degradation-enhancing alpha-mannosidase-like protein 2 (Mus musculus (Mouse)).